Consider the following 239-residue polypeptide: Ribonuclease HII (239 aa).

Residues 18–231 (KIIVGLDEAG…SKNLLKEIEE (214 aa)) enclose the RNase H type-2 domain. Residues D24, E25, and D125 each contribute to the a divalent metal cation site.

Belongs to the RNase HII family. Mn(2+) serves as cofactor. The cofactor is Mg(2+).

The protein resides in the cytoplasm. The enzyme catalyses Endonucleolytic cleavage to 5'-phosphomonoester.. In terms of biological role, endonuclease that specifically degrades the RNA of RNA-DNA hybrids. The sequence is that of Ribonuclease HII from Methanococcus maripaludis (strain C5 / ATCC BAA-1333).